We begin with the raw amino-acid sequence, 2797 residues long: Nonribosomal peptide synthetase penN (2797 aa).

The interval Ser239–Arg625 is adenylation 1. The region spanning Thr751–Thr824 is the Carrier 1 domain. An O-(pantetheine 4'-phosphoryl)serine modification is found at Ser785. The disordered stretch occupies residues Pro830–Tyr856. A condensation 1 region spans residues Gln870–Thr1299. Residues Phe1328 to Arg1731 form an adenylation 2 region. The tract at residues Leu1857–Asp1953 is methyltransferase. The Carrier 2 domain occupies Ser2277–Arg2351. Ser2311 carries the post-translational modification O-(pantetheine 4'-phosphoryl)serine. The tract at residues Tyr2516–Leu2658 is condensation 2.

The protein belongs to the NRP synthetase family.

It carries out the reaction O-methyl-L-tyrosine + anthranilate + S-adenosyl-L-methionine + 2 ATP = (-)-4'-methoxycyclopeptine + 2 AMP + S-adenosyl-L-homocysteine + 2 diphosphate + 2 H(+). The enzyme catalyses anthranilate + L-phenylalanine + S-adenosyl-L-methionine + 2 ATP = cyclopeptine + 2 AMP + S-adenosyl-L-homocysteine + 2 diphosphate + 2 H(+). The protein operates within secondary metabolite biosynthesis. It functions in the pathway alkaloid biosynthesis. It participates in mycotoxin biosynthesis. Its function is as follows. Nonribosomal peptide synthetase; part of the gene cluster that mediates the biosynthesis of penigequinolones, potent insecticidal alkaloids that contain a highly modified 10-carbon prenyl group. The first stage is catalyzed by the nonribosomal peptide synthetase penN that condenses anthranilic acid and O-methyl-L-tyrosine to produce 4'-methoxycyclopeptin. 4'-methoxycyclopeptin is then converted to 4'-methoxydehydrocyclopeptin by the ketoglutarate-dependent dioxygenase penM through dehydrogenation to form a double bond between C-alpha and C-beta of the O-methyltyrosine side chain. PenM also converts its first product methoxydehydrocyclopeptin to 4'-methoxycyclopenin. The following conversion of 4'methoxycyclopenin into 4'-methoxyviridicatin is catalyzed by the cyclopenase penL. 4'-methoxyviridicatin is the precursor of quinolone natural products, and is further converted to quinolinone B. The prenyltransferase penI then catalyzes the canonical Friedel-Crafts alkylation of quinolinone B with dimethylallyl cation to yield dimethylallyl quinolone, which is subjected to FAD-dependent dehydrogenation by the FAD-linked oxidoreductase penH to yield conjugated aryl diene. The delta(3') double bond then serves as the site of the second alkylation with DMAPP catalyzed by the prenyltransferase penG to yield a carbenium ion intermediate, which can be attacked by H(2)O to yield a styrenyl quinolone containing a C3'-hydroxyprenyl chain, or undergo cyclization to yield yaequinolones J1 and J2. The conversion of the styrenyl quinolone into the tetrahydrofuran-containing yaequinolone C is performed by the FAD-dependent monooxygenase penE and involves epoxidation of the terminal C7'-C8' olefin, followed by epoxide ring opening initiated by the C3' hydroxyl group. The predicted cysteine hydrolase penJ acts as an epoxide hydrolase that enhances the rate of the 5-exo-tet cyclization step, increasing the yield of yaequinolone C. PenF catalyzes the cationic rearrangement of the epoxide formed by penE (before ring opening to produce yaequinolone C) into yaequinolone D. Finally, the short-chain dehydrogenase/reductase (SDR)-like reductase penD, catalyzes both the dehydration of yaequinolone D and the reduction of the resulting oxonium to yield penigequinolone. The protein is Nonribosomal peptide synthetase penN of Penicillium thymicola.